We begin with the raw amino-acid sequence, 176 residues long: Membrane glycoprotein UL144 (176 aa).

The signal sequence occupies residues 1–20 (MKPLIMLICFAVILLQLGVT). 2 TNFR-Cys repeats span residues 22-56 (VCQHNEVQLGNECCPPCGSGQRVTKVCTDYTSVTC) and 58-95 (PCPNGTYVSGLYNCTDCTQCNVTQVMIRNCTSTNNTVC). Disulfide bonds link C23-C34, C35-C48, C38-C56, C59-C71, C74-C87, and C77-C95. Residues 134-154 (LAWLSLFIFLVGIILLILYLI) form a helical membrane-spanning segment.

As to quaternary structure, interacts with host TRIM23; this interaction causes auto-ubiquitination of TRAF6, leading to NF-kappaB activation.

It localises to the membrane. Its function is as follows. Activates NF-kappaB in a tumor necrosis factor receptor (TNFR)-associated factor 6 (TRAF6)-dependent manner, causing the up-regulation of the chemokine CCL22. The protein is Membrane glycoprotein UL144 (UL144) of Homo sapiens (Human).